Consider the following 321-residue polypeptide: MATVFCKVGGGEEAVPKKEALNVINVIDQLPKPCPNPKFINRSMATKGLLLPSRRSLASFSEEENTDVMMHMPVEDSEYSSDDTSMSPIPSTLMNPIKMAVTQPNSSFFAGILEGELNKLSLASVVKNTEKDNLAICPRSSKSQIATRGLLDLDNPALDTDTSSTRSESSVVLDVPEVPFICEHTVGDSTAVISWTYAAGKQQVSFYQVLLQEATKPADKDTPKIKTRPWIFNKILGTTVKLMELKSNTSYCLTVRAANTAGVGKWCKPYKFATVSTDFNSFPETNPIQVTVQRKQPHRRTVSMTMEEMRRLEDLEYLYPY.

In terms of domain architecture, Fibronectin type-III spans 175–277 (VPEVPFICEH…KPYKFATVST (103 aa)).

This Mus musculus (Mouse) protein is Fibronectin type III domain-containing protein 8 (Fndc8).